We begin with the raw amino-acid sequence, 1374 residues long: DNA-directed RNA polymerase subunit beta' (1374 aa).

The interval 1–47 (MTSTSPKSRKPSTKTTKSKSKSKSKSKAAKAAAASASPALARTPPQF) is disordered. The span at 7-28 (KSRKPSTKTTKSKSKSKSKSKA) shows a compositional bias: basic residues. Low complexity predominate over residues 29-45 (AKAAAASASPALARTPP). Zn(2+)-binding residues include Cys-258, Cys-325, Cys-332, and Cys-335. The segment at 1343–1374 (VRPTGENELEEEQLPDPSALEGLQQEGLLTEE) is disordered. Over residues 1362-1374 (LEGLQQEGLLTEE) the composition is skewed to low complexity.

It belongs to the RNA polymerase beta' chain family. RpoC2 subfamily. As to quaternary structure, in cyanobacteria the RNAP catalytic core is composed of 2 alpha, 1 beta, 1 beta', 1 gamma and 1 omega subunit. When a sigma factor is associated with the core the holoenzyme is formed, which can initiate transcription. Zn(2+) is required as a cofactor.

It catalyses the reaction RNA(n) + a ribonucleoside 5'-triphosphate = RNA(n+1) + diphosphate. In terms of biological role, DNA-dependent RNA polymerase catalyzes the transcription of DNA into RNA using the four ribonucleoside triphosphates as substrates. The sequence is that of DNA-directed RNA polymerase subunit beta' from Prochlorococcus marinus (strain MIT 9303).